We begin with the raw amino-acid sequence, 427 residues long: Peptidase B (427 aa).

2 residues coordinate Mn(2+): lysine 195 and aspartate 200. The active site involves lysine 207. Residues aspartate 218, aspartate 277, and glutamate 279 each coordinate Mn(2+). Arginine 281 is a catalytic residue.

It belongs to the peptidase M17 family. In terms of assembly, homohexamer. The cofactor is Mn(2+).

The protein localises to the cytoplasm. It carries out the reaction Release of an N-terminal amino acid, Xaa, from a peptide or arylamide. Xaa is preferably Glu or Asp but may be other amino acids, including Leu, Met, His, Cys and Gln.. In terms of biological role, probably plays an important role in intracellular peptide degradation. This Shigella flexneri protein is Peptidase B.